Reading from the N-terminus, the 179-residue chain is Hypoxanthine phosphoribosyltransferase (179 aa).

Diphosphate contacts are provided by R45 and G46. Residue E101 coordinates GMP. E101 contacts IMP. The Mg(2+) site is built by E101 and D102. D105 (proton acceptor) is an active-site residue. Residues 105–110 (DTGYTL), K133, and D161 each bind GMP. IMP is bound by residues 105–110 (DTGYTL) and K133. R167 contacts diphosphate.

This sequence belongs to the purine/pyrimidine phosphoribosyltransferase family. As to quaternary structure, homotetramer. It depends on Mg(2+) as a cofactor.

The protein resides in the cytoplasm. It carries out the reaction IMP + diphosphate = hypoxanthine + 5-phospho-alpha-D-ribose 1-diphosphate. It catalyses the reaction GMP + diphosphate = guanine + 5-phospho-alpha-D-ribose 1-diphosphate. Its pathway is purine metabolism; IMP biosynthesis via salvage pathway; IMP from hypoxanthine: step 1/1. In terms of biological role, purine salvage pathway enzyme which catalyzes the transfer of the ribosyl-5-phosphate group from 5-phospho-alpha-D-ribose 1-diphosphate (PRPP) to the N9 position of hypoxanthine to yield IMP (inosine 5'-monophosphate). To a lesser extent, can also act on guanine leading to GMP, but shows a highly less efficient activity with xanthine. The chain is Hypoxanthine phosphoribosyltransferase (hpt) from Haemophilus influenzae (strain ATCC 51907 / DSM 11121 / KW20 / Rd).